A 253-amino-acid polypeptide reads, in one-letter code: Retinoic acid early-inducible protein 1-gamma (253 aa).

A signal peptide spans 1–28 (MAKAAVTKRHHFMIQKLLILLSYGYTNG). Cysteines 37 and 56 form a disulfide. 5 N-linked (GlcNAc...) asparagine glycosylation sites follow: N38, N70, N83, N143, and N156. A disulfide bridge links C90 with C190. The tract at residues 198–230 (LKQSKEKPRSTSRSPSITQLTSTSPLPPPSHST) is disordered. Residues 211–221 (SPSITQLTSTS) show a composition bias toward low complexity. S227 carries GPI-anchor amidated serine lipidation. A propeptide spans 228 to 253 (HSTSKKGFISVGLIFISLLFAFAFAM) (removed in mature form).

Belongs to the NKG2D ligand family. Glycosylated. As to expression, expressed predominantly in embryonic brain.

It localises to the cell membrane. In terms of biological role, acts as a ligand for KLRK1. The chain is Retinoic acid early-inducible protein 1-gamma (Raet1c) from Mus musculus (Mouse).